The following is a 701-amino-acid chain: Kinesin-like protein KIN-10C (701 aa).

The region spanning 8-318 (VVRVVARVKP…LNLASRICLG (311 aa)) is the Kinesin motor domain. 94–101 (GARNSGKT) provides a ligand contact to ATP.

This sequence belongs to the TRAFAC class myosin-kinesin ATPase superfamily. Kinesin family. KIN-10 subfamily.

In Arabidopsis thaliana (Mouse-ear cress), this protein is Kinesin-like protein KIN-10C.